The sequence spans 610 residues: Methionine--tRNA ligase (610 aa).

The short motif at 12–22 is the 'HIGH' region element; that stretch reads PYANGPRHIGH. C144, C147, C157, and C160 together coordinate Zn(2+). Residues 348 to 352 carry the 'KMSKS' region motif; that stretch reads KFSSS. S351 serves as a coordination point for ATP.

It belongs to the class-I aminoacyl-tRNA synthetase family. MetG type 1 subfamily. Monomer. It depends on Zn(2+) as a cofactor.

The protein localises to the cytoplasm. The catalysed reaction is tRNA(Met) + L-methionine + ATP = L-methionyl-tRNA(Met) + AMP + diphosphate. Its function is as follows. Is required not only for elongation of protein synthesis but also for the initiation of all mRNA translation through initiator tRNA(fMet) aminoacylation. This Corynebacterium diphtheriae (strain ATCC 700971 / NCTC 13129 / Biotype gravis) protein is Methionine--tRNA ligase.